The following is a 131-amino-acid chain: Profilin-4 (131 aa).

A disulfide bond links C13 and C115. An Involved in PIP2 interaction motif is present at residues 81–97; that stretch reads AVIRGKKGAGGITIKKT. The residue at position 111 (T111) is a Phosphothreonine.

The protein belongs to the profilin family. In terms of assembly, occurs in many kinds of cells as a complex with monomeric actin in a 1:1 ratio. Post-translationally, phosphorylated by MAP kinases.

The protein resides in the cytoplasm. It localises to the cytoskeleton. Functionally, binds to actin and affects the structure of the cytoskeleton. At high concentrations, profilin prevents the polymerization of actin, whereas it enhances it at low concentrations. The protein is Profilin-4 of Phleum pratense (Common timothy).